The chain runs to 205 residues: Large ribosomal subunit protein uL13 (205 aa).

It belongs to the universal ribosomal protein uL13 family.

In Lupinus luteus (European yellow lupine), this protein is Large ribosomal subunit protein uL13 (RPL13A).